The chain runs to 139 residues: Phosphoribosyl-AMP cyclohydrolase (139 aa).

Mg(2+) is bound at residue D91. C92 is a binding site for Zn(2+). Residues D93 and D95 each coordinate Mg(2+). Residues C110 and C117 each contribute to the Zn(2+) site.

The protein belongs to the PRA-CH family. As to quaternary structure, homodimer. The cofactor is Mg(2+). Zn(2+) serves as cofactor.

It is found in the cytoplasm. It carries out the reaction 1-(5-phospho-beta-D-ribosyl)-5'-AMP + H2O = 1-(5-phospho-beta-D-ribosyl)-5-[(5-phospho-beta-D-ribosylamino)methylideneamino]imidazole-4-carboxamide. It functions in the pathway amino-acid biosynthesis; L-histidine biosynthesis; L-histidine from 5-phospho-alpha-D-ribose 1-diphosphate: step 3/9. Catalyzes the hydrolysis of the adenine ring of phosphoribosyl-AMP. This chain is Phosphoribosyl-AMP cyclohydrolase, found in Brucella canis (strain ATCC 23365 / NCTC 10854 / RM-666).